Consider the following 321-residue polypeptide: MITRLFENDKQLEGFFSSLDKKKKYLLALSGGSDSLFLMYLLKSRAIFFTAVHVDYGWRETSYQEASDLAALCEQEQIPFILDRPEATDPMDSRDIENAARRYRYELFYRLCKEKCFSGVFLGHHADDQAETILKRVFEGAHLGNLKGMSAQVMYRDVALLRPLLHIPKHKIVEALDSHQVQYVQDITNCNERFLRARMRERLFPYLQDVFGKNIRDPLLSLAGDSAELREYLDQQTAPFLLRVVDNERGKLLPIEQELLKTPFLAKWVCKQFFLNEGLVASKSFLQTVYDHLMTGSTARLRLRNRTVLVKARGVIIESIY.

S30–S35 is an ATP binding site.

It belongs to the tRNA(Ile)-lysidine synthase family.

The protein localises to the cytoplasm. It carries out the reaction cytidine(34) in tRNA(Ile2) + L-lysine + ATP = lysidine(34) in tRNA(Ile2) + AMP + diphosphate + H(+). Its function is as follows. Ligates lysine onto the cytidine present at position 34 of the AUA codon-specific tRNA(Ile) that contains the anticodon CAU, in an ATP-dependent manner. Cytidine is converted to lysidine, thus changing the amino acid specificity of the tRNA from methionine to isoleucine. The protein is tRNA(Ile)-lysidine synthase of Chlamydia trachomatis serovar L2 (strain ATCC VR-902B / DSM 19102 / 434/Bu).